Reading from the N-terminus, the 495-residue chain is MAIDQPIKKRGRPPGSKNTKNKMEQKMELVHQRLALLDSSSGSDRDDDIGPRAIIIDCDEDDTDDVMEVVPLKMLMPKEVENEQRTVPGIPQTCNTQNTSNGRTNTTEVPVKGQNKCASYLPKKSSVQAFCGSAMKRAQEIQTKLPAEHPSFVKHMLHSHVVSGFWLGLPAGFCNKYLPKHDTDIVLEDENGNNHNTNYLGGKQGLSAGWRGFAINHDIKVGDVVVFELVSTTKFKVHIIRDKNISPTDRAPGLKSFYACKKRKISKEATDNATKPKEDPETTRVSSKVAHDDTQNLVHEAIDGIRFSDSEMSFDDVMSYSNFNIVVDGLVIDCKFPDHQRRTYYELCCAQKSFLHRHLLRQLSLTLVVGVIMETINIAEGIRACGAGTSSQEDFLIWKKTLQSFDLLGMNVAFLLKRVDDILGLPEQPRDPSECSKYNELKLERSRAGEKVKALESMMLTVKDVLKKIDAEMEEMESSVRNHDIALRKIATAPW.

2 disordered regions span residues 1 to 25 and 88 to 108; these read MAIDQPIKKRGRPPGSKNTKNKMEQ and PGIPQTCNTQNTSNGRTNTTE. A compositionally biased stretch (polar residues) spans 92-108; the sequence is QTCNTQNTSNGRTNTTE. Positions 152 to 243 form a DNA-binding region, TF-B3; that stretch reads FVKHMLHSHV…KFKVHIIRDK (92 aa). A compositionally biased stretch (basic and acidic residues) spans 268–282; that stretch reads EATDNATKPKEDPET. The disordered stretch occupies residues 268 to 289; it reads EATDNATKPKEDPETTRVSSKV.

The protein resides in the nucleus. In Oryza sativa subsp. japonica (Rice), this protein is B3 domain-containing protein Os01g0234100.